The chain runs to 724 residues: Solute carrier organic anion transporter family member 4C1 (724 aa).

Positions 1-80 are disordered; the sequence is MQGSKGVENP…PPGSQLSELE (80 aa). At 1-101 the chain is on the cytoplasmic side; that stretch reads MQGSKGVENP…QCLQRCNNPK (101 aa). Phosphoserine is present on residues Ser15 and Ser16. Thr19 carries the phosphothreonine modification. 3 positions are modified to phosphoserine: Ser24, Ser26, and Ser28. Positions 25–46 are enriched in polar residues; the sequence is ASPSQVEVSAVASRNQNGGSQP. The helical transmembrane segment at 102-122 threads the bilayer; the sequence is GFLLHYCLLALTQGIVVNGLV. Over 123–141 the chain is Extracellular; that stretch reads NISISTIEKRYEMKSSLTG. Residues 142–162 form a helical membrane-spanning segment; the sequence is LISSSYDISFCVLSLFVSFFG. Topologically, residues 163–168 are cytoplasmic; that stretch reads ERGHKP. A helical membrane pass occupies residues 169 to 193; it reads RWLAFASFMIGLGALVFSLPHFFSG. Residues 194-218 are Extracellular-facing; it reads RYELGTIFEDTCLTRNSTRCASSTS. Residues 219 to 249 traverse the membrane as a helical segment; it reads LLSNYFYVFVLGQLLLGTGGTPLYTLGTAFI. At 250 to 269 the chain is on the cytoplasmic side; the sequence is DDSVPTHKSSLYIGIGYSMS. Residues 270–290 form a helical membrane-spanning segment; that stretch reads ILGPAIGYVLGGQLLTMYIDV. Topologically, residues 291–306 are extracellular; that stretch reads AMGQSSDLTEDDPRWL. The helical transmembrane segment at 307–331 threads the bilayer; sequence GAWWIGFLLAWLFAWSLIMPFSCFP. Residues 332 to 376 are Cytoplasmic-facing; that stretch reads KHLPGTAKIQAGKTSQTHQNNSTSFQHMDENFGKSIKDFPTAVKN. The chain crosses the membrane as a helical span at residues 377 to 398; it reads LMRNTVFICLVLSTTSEALVTT. The Extracellular portion of the chain corresponds to 399–418; it reads GFATFLPKFIENQFGLTSSF. Residues 419–442 traverse the membrane as a helical segment; that stretch reads AATLGGAVLIPGAALGQILGGVLV. Residues 443–446 lie on the Cytoplasmic side of the membrane; sequence SKFK. A helical transmembrane segment spans residues 447-470; it reads MKCKNTMKFALCTSGVALMLSFVF. The Extracellular portion of the chain corresponds to 471 to 580; it reads IYAKCENGPF…KTQCSNLPIF (110 aa). The Kazal-like domain maps to 494–549; the sequence is GNLTAPCNANCNCLRSYYYPLCGSDGVQYFSPCFAGCLNSVSNRKPKAYYNCSCIE. 3 cysteine pairs are disulfide-bonded: Cys500/Cys530, Cys506/Cys526, and Cys515/Cys547. Residues 581-603 form a helical membrane-spanning segment; it reads LGIFFITVIFTFMAGTPITVSIL. At 604–612 the chain is on the cytoplasmic side; it reads RCVNHRQRS. A helical transmembrane segment spans residues 613–638; it reads LALGVQFMLLRLLGTIPGPIIFGVTI. Residues 639-672 are Extracellular-facing; the sequence is DSTCVLWDINECGTKGACWIYDNIRMAHMLVAIS. A helical membrane pass occupies residues 673 to 690; that stretch reads VTCKVITIFFNGLAIVLY. At 691–724 the chain is on the cytoplasmic side; that stretch reads KPPPPGTEVSFQSQNVVVSTITVEEDLNKIENEG.

It belongs to the organo anion transporter (TC 2.A.60) family. Predominantly expressed in kidney and lung but also weakly expressed in brain. Localizes primarily in the proximal straight tubules, the S3 fraction of the nephron.

Its subcellular location is the basolateral cell membrane. The protein localises to the apical cell membrane. It catalyses the reaction estrone 3-sulfate(out) = estrone 3-sulfate(in). It carries out the reaction L-thyroxine(out) = L-thyroxine(in). The enzyme catalyses 3,3',5-triiodo-L-thyronine(out) = 3,3',5-triiodo-L-thyronine(in). The catalysed reaction is chenodeoxycholate(out) = chenodeoxycholate(in). It catalyses the reaction glycocholate(out) = glycocholate(in). It carries out the reaction L-homoarginine(in) = L-homoarginine(out). The enzyme catalyses L-arginine(in) = L-arginine(out). The catalysed reaction is N(omega),N(omega)-dimethyl-L-arginine(out) = N(omega),N(omega)-dimethyl-L-arginine(in). Its function is as follows. Mediates the transport of organic anions such as steroids (estrone 3-sulfate, chenodeoxycholate, glycocholate) and thyroid hormones (3,3',5-triiodo-L-thyronine (T3), L-thyroxine (T4)), in the kidney. Capable of transporting cAMP and pharmacological substances such as digoxin, ouabain and methotrexate. Transport is independent of sodium, chloride ion, and ATP. Transport activity is stimulated by an acidic extracellular environment due to increased substrate affinity to the transporter. The driving force for this transport activity is currently not known. The role of hydrogencarbonate (HCO3(-), bicarbonate) as the probable counteranion that exchanges for organic anions is still not well defined. Functions as an uptake transporter at the apical membrane, suggesting a role in renal reabsorption. Involved in the renal secretion of the uremic toxin ADMA (N(omega),N(omega)-dimethyl-L-arginine or asymmetrical dimethylarginine), which is associated to cardiovascular events and mortality, and the structurally related amino acids L-arginine and L-homoarginine (a cardioprotective biomarker). Can act bidirectionally, suggesting a dual protective role of this transport protein; exporting L-homoarginine after being synthesized in proximal tubule cells, and mediating uptake of ADMA from the blood into proximal tubule cells where it is degraded by the enzyme dimethylarginine dimethylaminohydrolase 1 (DDAH1). May be involved in sperm maturation by enabling directed movement of organic anions and compounds within or between cells. This ion-transporting process is important to maintain the strict epididymal homeostasis necessary for sperm maturation. May have a role in secretory functions since seminal vesicle epithelial cells are assumed to secrete proteins involved in decapacitation by modifying surface proteins to facilitate the acquisition of the ability to fertilize the egg. This chain is Solute carrier organic anion transporter family member 4C1, found in Rattus norvegicus (Rat).